A 488-amino-acid chain; its full sequence is GTPase Der (488 aa).

EngA-type G domains lie at 3 to 166 (PVVA…AEAM) and 199 to 372 (IKLA…DSAT). GTP contacts are provided by residues 9–16 (GRPNVGKS), 56–60 (DTGGI), 118–121 (NKVD), 205–212 (GKPNVGKS), 252–256 (DTAGV), and 317–320 (NKWD). In terms of domain architecture, KH-like spans 373 to 457 (RRVSTSMLTR…PIQLRFQEGD (85 aa)). The tract at residues 460-488 (FENKTEKLTMSQERRRKRAQSHIKDRKTK) is disordered. Over residues 473–488 (RRRKRAQSHIKDRKTK) the composition is skewed to basic residues.

The protein belongs to the TRAFAC class TrmE-Era-EngA-EngB-Septin-like GTPase superfamily. EngA (Der) GTPase family. As to quaternary structure, associates with the 50S ribosomal subunit.

GTPase that plays an essential role in the late steps of ribosome biogenesis. This chain is GTPase Der, found in Shewanella baltica (strain OS155 / ATCC BAA-1091).